The following is a 306-amino-acid chain: MSVDTSVRLPGMPVKNPVMTASGTFGYGLEFAPYGDLRSLGGIVVKGLSLAPRLGNPMPRIAETPCGMLNAIGLQNCGVEKFLRDKLPRLPWRETPIIANLYACDADEFAELAGVLSAEEGVAALEVNISCPNVKAGGIAFGQDPCMAGKLAEAVKKRAGDKPVWVKLSPNVTDIVSIARAAVLGGADALTCINTLTGMSVDIRSRKPRLANVIGGLSGPAIKPVALRAVWQVCQAVSAPVIGVGGISSAEDVLEFILVGAHAVQIGTANFMRPDMAFRIAERLPQLMAELGIEDLASYRGSLRVG.

FMN contacts are provided by residues S22 and 46-47 (KG). Residues K46 and 70 to 74 (NAIGL) each bind substrate. Residues N100 and N128 each contribute to the FMN site. A substrate-binding site is contributed by N128. The Nucleophile role is filled by C131. 2 residues coordinate FMN: K167 and I193. 194–195 (NT) contributes to the substrate binding site. FMN contacts are provided by residues G219, 245–246 (GG), and 267–268 (GT).

This sequence belongs to the dihydroorotate dehydrogenase family. Type 1 subfamily. In terms of assembly, heterotetramer of 2 PyrK and 2 PyrD type B subunits. The cofactor is FMN.

It localises to the cytoplasm. The enzyme catalyses (S)-dihydroorotate + NAD(+) = orotate + NADH + H(+). It participates in pyrimidine metabolism; UMP biosynthesis via de novo pathway; orotate from (S)-dihydroorotate (NAD(+) route): step 1/1. Functionally, catalyzes the conversion of dihydroorotate to orotate with NAD(+) as electron acceptor. The sequence is that of Dihydroorotate dehydrogenase B (NAD(+)), catalytic subunit (pyrD) from Solidesulfovibrio magneticus (strain ATCC 700980 / DSM 13731 / RS-1) (Desulfovibrio magneticus).